The chain runs to 554 residues: Solute carrier family 22 member 1 (554 aa).

Over 1-21 the chain is Cytoplasmic; that stretch reads MPTVDDILEQVGESGWFQKQA. Residues 22–42 form a helical membrane-spanning segment; the sequence is FLILCLLSAAFAPICVGIVFL. Topologically, residues 43–149 are extracellular; that stretch reads GFTPDHHCQS…LVCADSWKLD (107 aa). The N-linked (GlcNAc...) asparagine glycan is linked to N71. The chain crosses the membrane as a helical span at residues 150–170; the sequence is LFQSCLNAGFLFGSLGVGYFA. Over 171-176 the chain is Cytoplasmic; sequence DRFGRK. Residues 177-197 form a helical membrane-spanning segment; that stretch reads LCLLGTVLVNAVSGVLMAFSP. The Extracellular portion of the chain corresponds to 198–206; that stretch reads NYMSMLLFR. A helical membrane pass occupies residues 207–229; that stretch reads LLQGLVSKGNWMAGYTLITEFVG. Residues 230–235 lie on the Cytoplasmic side of the membrane; that stretch reads SGSRRT. A helical transmembrane segment spans residues 236 to 256; it reads VAIMYQMAFTVGLVALTGLAY. The Extracellular portion of the chain corresponds to 257 to 262; it reads ALPHWR. A helical membrane pass occupies residues 263–283; that stretch reads WLQLAVSLPTFLFLLYYWCVP. The Proline-rich sequence motif lies at 283–287; that stretch reads PESPR. Topologically, residues 284–347 are cytoplasmic; the sequence is ESPRWLLSQK…FRTPRLRKRT (64 aa). A Phosphoserine modification is found at S333. Residues 348-368 traverse the membrane as a helical segment; the sequence is FILMYLWFTDSVLYQGLILHM. The Extracellular segment spans residues 369–376; it reads GATSGNLY. A helical transmembrane segment spans residues 377–397; that stretch reads LDFLYSALVEIPGAFIALITI. At 398–402 the chain is on the cytoplasmic side; the sequence is DRVGR. A helical transmembrane segment spans residues 403 to 423; that stretch reads IYPMAMSNLLAGAACLVMIFI. At 424–431 the chain is on the extracellular side; sequence SPDLHWLN. The chain crosses the membrane as a helical span at residues 432–452; that stretch reads IIIMCVGRMGITIAIQMICLV. Topologically, residues 453–464 are cytoplasmic; that stretch reads NAELYPTFVRNL. A helical transmembrane segment spans residues 465-485; it reads GVMVCSSLCDIGGIITPFIVF. The Extracellular portion of the chain corresponds to 486 to 492; sequence RLREVWQ. A helical transmembrane segment spans residues 493–513; it reads ALPLILFAVLGLLAAGVTLLL. Residues 514-554 are Cytoplasmic-facing; the sequence is PETKGVALPETMKDAENLGRKAKPKENTIYLKVQTSEPSGT. T541 bears the Phosphothreonine mark.

Belongs to the major facilitator (TC 2.A.1) superfamily. Organic cation transporter (TC 2.A.1.19) family. Phosphorylated. In terms of tissue distribution, widely expressed with high level in liver. In liver, expressed around the central vein. Expressed in kidney. Expressed in small intestine enterocytes. Localized to peritubular myoid cells, Leydig cells and moderately to the basal membrane of Sertoli cells in testes. Expressed in tracheal and bronchial ciliated epithelium in the respiratory tract. Also expressed in skeletal muscle, stomach, spleen, heart, placentacolon, brain, granulycytes and lympohocytes. Expressed in liver and in glial cell lines. As to expression, expressed in glial cell lines. Not expressed in liver.

The protein resides in the basolateral cell membrane. Its subcellular location is the apical cell membrane. The protein localises to the lateral cell membrane. It localises to the basal cell membrane. It is found in the cell membrane. It catalyses the reaction 1-methylnicotinamide(out) = 1-methylnicotinamide(in). The enzyme catalyses dopamine(out) = dopamine(in). It carries out the reaction serotonin(out) = serotonin(in). The catalysed reaction is (R)-adrenaline(out) = (R)-adrenaline(in). It catalyses the reaction histamine(out) = histamine(in). The enzyme catalyses guanidine(out) = guanidine(in). It carries out the reaction acetylcholine(in) = acetylcholine(out). The catalysed reaction is thiamine(in) = thiamine(out). It catalyses the reaction agmatine(out) = agmatine(in). The enzyme catalyses putrescine(out) = putrescine(in). It carries out the reaction spermidine(in) = spermidine(out). The catalysed reaction is L-histidyl-L-proline diketopiperazine(in) = L-histidyl-L-proline diketopiperazine(out). It catalyses the reaction (R)-salsolinol(in) = (R)-salsolinol(out). The enzyme catalyses prostaglandin F2alpha(out) = prostaglandin F2alpha(in). It carries out the reaction prostaglandin E2(out) = prostaglandin E2(in). With respect to regulation, phosphorylation of the transporter leads to changes in its substrate affinity, resulting in a regulation of the transport activity. In contrast with rat ortholog, ASP uptake is inhibited by protein kinase A (PKA) and C (PKC) activation. ASP uptake is also endogenously activated by calmodulin, the calmodulin-dependent kinase II and LCK tyrosine kinase. Inhibited by cGMP, most likely through a cGMP-binding protein that interacts with OCT1. Electrogenic voltage-dependent transporter that mediates the transport of a variety of organic cations such as endogenous bioactive amines, cationic drugs and xenobiotics. Functions as a pH- and Na(+)-independent, bidirectional transporter. Cation cellular uptake or release is driven by the electrochemical potential (i.e. membrane potential and concentration gradient) and substrate selectivity. Hydrophobicity is a major requirement for recognition in polyvalent substrates and inhibitors. Primarily expressed at the basolateral membrane of hepatocytes and proximal tubules and involved in the uptake and disposition of cationic compounds by hepatic and renal clearance from the blood flow. Most likely functions as an uptake carrier in enterocytes contributing to the intestinal elimination of organic cations from the systemic circulation. Transports endogenous monoamines such as N-1-methylnicotinamide (NMN), guanidine, histamine, neurotransmitters dopamine, serotonin and adrenaline. Also transports natural polyamines such as spermidine, agmatine and putrescine at low affinity, but relatively high turnover. Involved in the hepatic uptake of vitamin B1/thiamine, hence regulating hepatic lipid and energy metabolism. Mediates the bidirectional transport of acetylcholine (ACh) at the apical membrane of ciliated cell in airway epithelium, thereby playing a role in luminal release of ACh from bronchial epithelium. Transports dopaminergic neuromodulators cyclo(his-pro) and salsolinol with lower efficency. Also capable of transporting non-amine endogenous compounds such as prostaglandin E2 (PGE2) and prostaglandin F2-alpha (PGF2-alpha). May contribute to the transport of cationic compounds in testes across the blood-testis-barrier. Also involved in the uptake of xenobiotics tributylmethylammonium (TBuMA), quinidine, N-methyl-quinine (NMQ), N-methyl-quinidine (NMQD) N-(4,4-azo-n-pentyl)-quinuclidine (APQ), azidoprocainamide methoiodide (AMP), N-(4,4-azo-n-pentyl)-21-deoxyajmalinium (APDA) and 4-(4-(dimethylamino)styryl)-N-methylpyridinium (ASP). Its function is as follows. Mediates the uptake of 1-methyl-4-phenylpyridinium (MPP(+)). Functionally, not able to uptake 1-methyl-4-phenylpyridinium (MPP(+)). This Homo sapiens (Human) protein is Solute carrier family 22 member 1.